The sequence spans 125 residues: Ixonnexin (125 aa).

The first 21 residues, 1–21 (MGLTGTTLVLVCVAFFGSAAA), serve as a signal peptide directing secretion. A glycan (N-linked (GlcNAc...) asparagine) is linked at Asn26. The disordered stretch occupies residues 81–125 (TSSGGPDDTGDNTPPPTEKPKQKKKKPKKTKKPKRKSKKDQKENF). Over residues 101–119 (KQKKKKPKKTKKPKRKSKK) the composition is skewed to basic residues.

Belongs to the salp14 family. Homodimer. Interacts with host PLG. Interacts with host PLAT. As to expression, saliva (at protein level).

The protein localises to the secreted. In terms of biological role, salivary protein that promotes host fibrinolysis via accelerating host plasmin generation from plasminogen (PLG) initiated by tPA/tissue-type plasminogen activator (PLAT). Does not affect urokinase (PLAU)-mediated fibrinolysis in the host. Enhances amidolytic activity of host coagulation factor Xa (F10). The protein is Ixonnexin of Ixodes scapularis (Black-legged tick).